We begin with the raw amino-acid sequence, 353 residues long: Photosystem II protein D1 (353 aa).

Threonine 2 carries the N-acetylthreonine modification. Threonine 2 carries the phosphothreonine modification. Transmembrane regions (helical) follow at residues tyrosine 29 to serine 46, histidine 118 to leucine 133, and tryptophan 142 to alanine 156. Histidine 118 provides a ligand contact to chlorophyll a. Tyrosine 126 is a pheophytin a binding site. [CaMn4O5] cluster is bound by residues aspartate 170 and glutamate 189. Residues phenylalanine 197–leucine 218 form a helical membrane-spanning segment. Histidine 198 contributes to the chlorophyll a binding site. A quinone-binding positions include histidine 215 and serine 264–phenylalanine 265. Residue histidine 215 coordinates Fe cation. Residue histidine 272 coordinates Fe cation. The helical transmembrane segment at phenylalanine 274–leucine 288 threads the bilayer. [CaMn4O5] cluster contacts are provided by histidine 332, glutamate 333, aspartate 342, and alanine 344. A propeptide spanning residues alanine 345–glycine 353 is cleaved from the precursor.

Belongs to the reaction center PufL/M/PsbA/D family. In terms of assembly, PSII is composed of 1 copy each of membrane proteins PsbA, PsbB, PsbC, PsbD, PsbE, PsbF, PsbH, PsbI, PsbJ, PsbK, PsbL, PsbM, PsbT, PsbX, PsbY, PsbZ, Psb30/Ycf12, at least 3 peripheral proteins of the oxygen-evolving complex and a large number of cofactors. It forms dimeric complexes. It depends on The D1/D2 heterodimer binds P680, chlorophylls that are the primary electron donor of PSII, and subsequent electron acceptors. It shares a non-heme iron and each subunit binds pheophytin, quinone, additional chlorophylls, carotenoids and lipids. D1 provides most of the ligands for the Mn4-Ca-O5 cluster of the oxygen-evolving complex (OEC). There is also a Cl(-1) ion associated with D1 and D2, which is required for oxygen evolution. The PSII complex binds additional chlorophylls, carotenoids and specific lipids. as a cofactor. Tyr-161 forms a radical intermediate that is referred to as redox-active TyrZ, YZ or Y-Z. In terms of processing, C-terminally processed by CTPA; processing is essential to allow assembly of the oxygen-evolving complex and thus photosynthetic growth.

It is found in the plastid. Its subcellular location is the chloroplast thylakoid membrane. The enzyme catalyses 2 a plastoquinone + 4 hnu + 2 H2O = 2 a plastoquinol + O2. Photosystem II (PSII) is a light-driven water:plastoquinone oxidoreductase that uses light energy to abstract electrons from H(2)O, generating O(2) and a proton gradient subsequently used for ATP formation. It consists of a core antenna complex that captures photons, and an electron transfer chain that converts photonic excitation into a charge separation. The D1/D2 (PsbA/PsbD) reaction center heterodimer binds P680, the primary electron donor of PSII as well as several subsequent electron acceptors. This Triticum aestivum (Wheat) protein is Photosystem II protein D1.